Here is a 553-residue protein sequence, read N- to C-terminus: CTP synthase (553 aa).

Residues 1–270 are amidoligase domain; that stretch reads MTKYVFVTGG…DRLICEELRL (270 aa). Ser-13 contributes to the CTP binding site. A UTP-binding site is contributed by Ser-13. Residues 14 to 19 and Asp-71 each bind ATP; that span reads SLGKGI. Mg(2+) is bound by residues Asp-71 and Glu-144. Residues 151-153, 191-196, and Lys-227 each bind CTP; these read DIE and KTKPTQ. Residues 191–196 and Lys-227 each bind UTP; that span reads KTKPTQ. The region spanning 295 to 547 is the Glutamine amidotransferase type-1 domain; the sequence is TIGMVGKYVD…VQAALACQQT (253 aa). An L-glutamine-binding site is contributed by Gly-356. The active-site Nucleophile; for glutamine hydrolysis is Cys-383. L-glutamine-binding positions include 384 to 387, Glu-407, and Arg-473; that span reads LGMQ. Active-site residues include His-520 and Glu-522.

The protein belongs to the CTP synthase family. Homotetramer.

The enzyme catalyses UTP + L-glutamine + ATP + H2O = CTP + L-glutamate + ADP + phosphate + 2 H(+). It catalyses the reaction L-glutamine + H2O = L-glutamate + NH4(+). It carries out the reaction UTP + NH4(+) + ATP = CTP + ADP + phosphate + 2 H(+). It participates in pyrimidine metabolism; CTP biosynthesis via de novo pathway; CTP from UDP: step 2/2. With respect to regulation, allosterically activated by GTP, when glutamine is the substrate; GTP has no effect on the reaction when ammonia is the substrate. The allosteric effector GTP functions by stabilizing the protein conformation that binds the tetrahedral intermediate(s) formed during glutamine hydrolysis. Inhibited by the product CTP, via allosteric rather than competitive inhibition. Its function is as follows. Catalyzes the ATP-dependent amination of UTP to CTP with either L-glutamine or ammonia as the source of nitrogen. Regulates intracellular CTP levels through interactions with the four ribonucleotide triphosphates. In Burkholderia mallei (strain NCTC 10247), this protein is CTP synthase.